A 57-amino-acid polypeptide reads, in one-letter code: MAVPKRRMSRANTRMRRSQWKADNVALQEVKIDGQTVRIPRRLVKAAQLGLVDVEQF.

It belongs to the bacterial ribosomal protein bL32 family.

The protein is Large ribosomal subunit protein bL32 of Corynebacterium glutamicum (strain R).